Here is a 293-residue protein sequence, read N- to C-terminus: Cbb3-type cytochrome c oxidase subunit FixP (293 aa).

Over residues 1–11 (MSTSHESHHAP) the composition is skewed to basic and acidic residues. The disordered stretch occupies residues 1–25 (MSTSHESHHAPVDGAGGPSTTGHEW). The chain crosses the membrane as a helical span at residues 43-63 (FYATIIWAFGYWVAYPAWPLV). 2 consecutive Cytochrome c domains span residues 114–201 (LARA…RSLS) and 209–290 (PAAK…HTLG). 8 residues coordinate heme c: C127, C130, H131, M178, C222, C225, H226, and M267.

It belongs to the CcoP / FixP family. In terms of assembly, component of the cbb3-type cytochrome c oxidase at least composed of FixN, FixO, FixQ and FixP. Heme c is required as a cofactor.

Its subcellular location is the cell inner membrane. It functions in the pathway energy metabolism; oxidative phosphorylation. Its function is as follows. C-type cytochrome. Part of the cbb3-type cytochrome c oxidase complex. FixP subunit is required for transferring electrons from donor cytochrome c via its heme groups to FixO subunit. From there, electrons are shuttled to the catalytic binuclear center of FixN subunit where oxygen reduction takes place. The complex also functions as a proton pump. This is Cbb3-type cytochrome c oxidase subunit FixP from Azorhizobium caulinodans (strain ATCC 43989 / DSM 5975 / JCM 20966 / LMG 6465 / NBRC 14845 / NCIMB 13405 / ORS 571).